Here is a 377-residue protein sequence, read N- to C-terminus: UPF0754 membrane protein lwe2241 (377 aa).

The next 2 membrane-spanning stretches (helical) occupy residues 1 to 21 (MSVL…GAMT) and 357 to 377 (YLGG…AIWI).

The protein belongs to the UPF0754 family.

The protein localises to the cell membrane. The chain is UPF0754 membrane protein lwe2241 from Listeria welshimeri serovar 6b (strain ATCC 35897 / DSM 20650 / CCUG 15529 / CIP 8149 / NCTC 11857 / SLCC 5334 / V8).